Here is a 478-residue protein sequence, read N- to C-terminus: DNA gyrase subunit B (478 aa).

A Toprim domain is found at 319–438; that stretch reads CELYLVEGDS…QGYLYVALPP (120 aa). Mg(2+) contacts are provided by Glu325, Asp403, and Asp405.

It belongs to the type II topoisomerase GyrB family. Heterotetramer, composed of two GyrA and two GyrB chains. In the heterotetramer, GyrA contains the active site tyrosine that forms a transient covalent intermediate with DNA, while GyrB binds cofactors and catalyzes ATP hydrolysis. Mg(2+) is required as a cofactor. The cofactor is Mn(2+). Requires Ca(2+) as cofactor.

It is found in the cytoplasm. The enzyme catalyses ATP-dependent breakage, passage and rejoining of double-stranded DNA.. Its function is as follows. A type II topoisomerase that negatively supercoils closed circular double-stranded (ds) DNA in an ATP-dependent manner to modulate DNA topology and maintain chromosomes in an underwound state. Negative supercoiling favors strand separation, and DNA replication, transcription, recombination and repair, all of which involve strand separation. Also able to catalyze the interconversion of other topological isomers of dsDNA rings, including catenanes and knotted rings. Type II topoisomerases break and join 2 DNA strands simultaneously in an ATP-dependent manner. The polypeptide is DNA gyrase subunit B (gyrB) (Eisenibacter elegans (Flexibacter elegans)).